We begin with the raw amino-acid sequence, 197 residues long: Elongation factor Ts (197 aa).

The interval 81-84 (TDFV) is involved in Mg(2+) ion dislocation from EF-Tu.

Belongs to the EF-Ts family.

It is found in the cytoplasm. Associates with the EF-Tu.GDP complex and induces the exchange of GDP to GTP. It remains bound to the aminoacyl-tRNA.EF-Tu.GTP complex up to the GTP hydrolysis stage on the ribosome. This is Elongation factor Ts from Coprothermobacter proteolyticus (strain ATCC 35245 / DSM 5265 / OCM 4 / BT).